We begin with the raw amino-acid sequence, 110 residues long: UPF0060 membrane protein RSp1275 (110 aa).

4 helical membrane passes run F8–L28, S33–L53, A63–A83, and I90–T110.

Belongs to the UPF0060 family.

The protein resides in the cell inner membrane. The chain is UPF0060 membrane protein RSp1275 from Ralstonia nicotianae (strain ATCC BAA-1114 / GMI1000) (Ralstonia solanacearum).